Here is a 555-residue protein sequence, read N- to C-terminus: Glutamine--tRNA ligase (555 aa).

The short motif at 35–45 (PEPNGYLHIGH) is the 'HIGH' region element. ATP-binding positions include 36 to 38 (EPN) and 42 to 48 (HIGHAKS). 2 residues coordinate L-glutamine: Asp68 and Tyr213. ATP contacts are provided by residues Thr232 and 262–263 (RL). Positions 269–273 (ITSKR) match the 'KMSKS' region motif.

This sequence belongs to the class-I aminoacyl-tRNA synthetase family. In terms of assembly, monomer.

The protein resides in the cytoplasm. It carries out the reaction tRNA(Gln) + L-glutamine + ATP = L-glutaminyl-tRNA(Gln) + AMP + diphosphate. The sequence is that of Glutamine--tRNA ligase from Azotobacter vinelandii (strain DJ / ATCC BAA-1303).